The sequence spans 1405 residues: DNA-directed RNA polymerase subunit beta' (1405 aa).

Zn(2+)-binding residues include Cys-70, Cys-72, Cys-85, and Cys-88. Positions 460, 462, and 464 each coordinate Mg(2+). Residues Cys-814, Cys-888, Cys-895, and Cys-898 each contribute to the Zn(2+) site.

It belongs to the RNA polymerase beta' chain family. As to quaternary structure, the RNAP catalytic core consists of 2 alpha, 1 beta, 1 beta' and 1 omega subunit. When a sigma factor is associated with the core the holoenzyme is formed, which can initiate transcription. It depends on Mg(2+) as a cofactor. Zn(2+) serves as cofactor.

The catalysed reaction is RNA(n) + a ribonucleoside 5'-triphosphate = RNA(n+1) + diphosphate. Functionally, DNA-dependent RNA polymerase catalyzes the transcription of DNA into RNA using the four ribonucleoside triphosphates as substrates. This chain is DNA-directed RNA polymerase subunit beta', found in Shewanella baltica (strain OS223).